A 721-amino-acid polypeptide reads, in one-letter code: Fatty acid oxidation complex subunit alpha (721 aa).

The segment at 1–190 (MIYEGKAITV…KVGAVDAVVA (190 aa)) is enoyl-CoA hydratase/isomerase. Position 297 (Asp-297) interacts with substrate. Residues 312–721 (KDVKQAAVLG…SFFGQASSEE (410 aa)) form a 3-hydroxyacyl-CoA dehydrogenase region. NAD(+) contacts are provided by residues Met-325, Asp-344, 401-403 (VVE), Lys-408, and Ser-430. The active-site For 3-hydroxyacyl-CoA dehydrogenase activity is the His-451. Residue Asn-454 participates in NAD(+) binding. Residues Asn-501 and Tyr-660 each contribute to the substrate site.

The protein in the N-terminal section; belongs to the enoyl-CoA hydratase/isomerase family. In the C-terminal section; belongs to the 3-hydroxyacyl-CoA dehydrogenase family. In terms of assembly, heterotetramer of two alpha chains (FadB) and two beta chains (FadA).

The enzyme catalyses a (3S)-3-hydroxyacyl-CoA + NAD(+) = a 3-oxoacyl-CoA + NADH + H(+). It catalyses the reaction a (3S)-3-hydroxyacyl-CoA = a (2E)-enoyl-CoA + H2O. It carries out the reaction a 4-saturated-(3S)-3-hydroxyacyl-CoA = a (3E)-enoyl-CoA + H2O. The catalysed reaction is (3S)-3-hydroxybutanoyl-CoA = (3R)-3-hydroxybutanoyl-CoA. The enzyme catalyses a (3Z)-enoyl-CoA = a 4-saturated (2E)-enoyl-CoA. It catalyses the reaction a (3E)-enoyl-CoA = a 4-saturated (2E)-enoyl-CoA. The protein operates within lipid metabolism; fatty acid beta-oxidation. Its function is as follows. Involved in the aerobic and anaerobic degradation of long-chain fatty acids via beta-oxidation cycle. Catalyzes the formation of 3-oxoacyl-CoA from enoyl-CoA via L-3-hydroxyacyl-CoA. It can also use D-3-hydroxyacyl-CoA and cis-3-enoyl-CoA as substrate. This is Fatty acid oxidation complex subunit alpha from Pseudomonas savastanoi pv. phaseolicola (strain 1448A / Race 6) (Pseudomonas syringae pv. phaseolicola (strain 1448A / Race 6)).